The following is a 296-amino-acid chain: Maltose/maltodextrin transport system permease protein MalG (296 aa).

The Cytoplasmic portion of the chain corresponds to 1 to 12 (MAMVQPKSQKWR). Residues 13-35 (LLATHLLMFTFIAMILFPLLMVI) form a helical membrane-spanning segment. The Periplasmic segment spans residues 36–88 (TISLRPGNFATGSLIPENISWEHWKLALGYSVVSPDGRVTPPPFPVMLWLWNS). Residues 85 to 281 (LWNSVKVAFI…LPITIVFLVA (197 aa)) form the ABC transmembrane type-1 domain. Residues 89 to 111 (VKVAFITAVGIVTLSTTCAYAFA) traverse the membrane as a helical segment. The Cytoplasmic segment spans residues 112 to 123 (RMHFRGKSTLLK). Residues 124-143 (GMLIFQMFPAVLSLVALYAL) traverse the membrane as a helical segment. Topologically, residues 144–152 (FDRLGEYVP) are periplasmic. The helical transmembrane segment at 153–175 (FIGLNTHGGVIFAYLGGIALHVW) threads the bilayer. Residues 176–205 (TIKGYFETIDGSLEEAAALDGATPWQAFRM) are Cytoplasmic-facing. A helical membrane pass occupies residues 206-228 (VLLPLSVPILAVVFILSFIGVIT). The Periplasmic segment spans residues 229–257 (EVPVASLLLRDVNNYTLAVGMQQYLNPQN). The helical transmembrane segment at 258–280 (YLWGDFAAAAVLSALPITIVFLV) threads the bilayer. The Cytoplasmic portion of the chain corresponds to 281-296 (AQRWLVSGLTAGGVKG).

It belongs to the binding-protein-dependent transport system permease family. MalFG subfamily. The complex is composed of two ATP-binding proteins (MalK), two transmembrane proteins (MalG and MalF) and a solute-binding protein (MalE).

The protein localises to the cell inner membrane. In terms of biological role, part of the ABC transporter complex MalEFGK involved in maltose/maltodextrin import. Probably responsible for the translocation of the substrate across the membrane. This is Maltose/maltodextrin transport system permease protein MalG (malG) from Photorhabdus laumondii subsp. laumondii (strain DSM 15139 / CIP 105565 / TT01) (Photorhabdus luminescens subsp. laumondii).